A 552-amino-acid chain; its full sequence is Acyl-CoA-dependent acyltransferase MAC1 (552 aa).

The protein belongs to the trichothecene O-acetyltransferase family.

It participates in secondary metabolite biosynthesis. In terms of biological role, acyl-CoA-dependent acyltransferase; part of the gene cluster that mediates the biosynthesis of mannosylerythritol lipids (MELs), surface-active substances that enhance the availability of water-insoluble substrates. Depending on the number of acetyl groups, mannosylerythritol lipids can be differentiated into MEL A (fully acetylated), MEL B and MEL C (monoacetylated at R-6 and R-4, respectively), and the fully deacetylated MEL D. The first step in the pathway is the generation of mannosylerythritol by the glycosyltransferase EMT1 which catalyzes the transfer of GDP-mannose to the C-4 atom of meso-erythritol. This reaction has to be stereospecific, since only mannosyl-D-erythritol is generated. The produced disaccharide is subsequently acylated with fatty acids of various lengths by the acyltransferases MAC1 and MAC2 at positions C-2 and C-3, repectively. The existence of MEL derivatives which carry an acetyl group at C-2 implies that at least MAC1 also accepts acetyl-CoA as a donor. The final step of MEL biosynthesis is the acetylation of the fully acylated mannosylerythritol lipids catalyzed by the acetyl-CoA-dependent acetyltransferase MAT1. MAT1 displays a relaxed regioselectivity and is able to transfer acetylgroups to both positions C-4 and C-6 of the mannosyl moiety. This is Acyl-CoA-dependent acyltransferase MAC1 from Pseudozyma antarctica (strain T-34) (Yeast).